We begin with the raw amino-acid sequence, 165 residues long: S-ribosylhomocysteine lyase (165 aa).

His-54, His-58, and Cys-128 together coordinate Fe cation.

This sequence belongs to the LuxS family. As to quaternary structure, homodimer. Fe cation serves as cofactor.

It catalyses the reaction S-(5-deoxy-D-ribos-5-yl)-L-homocysteine = (S)-4,5-dihydroxypentane-2,3-dione + L-homocysteine. Involved in the synthesis of autoinducer 2 (AI-2) which is secreted by bacteria and is used to communicate both the cell density and the metabolic potential of the environment. The regulation of gene expression in response to changes in cell density is called quorum sensing. Catalyzes the transformation of S-ribosylhomocysteine (RHC) to homocysteine (HC) and 4,5-dihydroxy-2,3-pentadione (DPD). The protein is S-ribosylhomocysteine lyase of Helicobacter hepaticus (strain ATCC 51449 / 3B1).